The following is a 110-amino-acid chain: ORC1-type DNA replication protein 3 (110 aa).

8-12 (SGKSL) serves as a coordination point for ATP.

The protein belongs to the CDC6/cdc18 family.

Functionally, involved in regulation of DNA replication. This is ORC1-type DNA replication protein 3 (orc3) from Halobacterium salinarum (strain ATCC 700922 / JCM 11081 / NRC-1) (Halobacterium halobium).